The primary structure comprises 309 residues: Homoserine kinase (309 aa).

An ATP-binding site is contributed by Pro91–Cys101.

Belongs to the GHMP kinase family. Homoserine kinase subfamily.

It localises to the cytoplasm. The catalysed reaction is L-homoserine + ATP = O-phospho-L-homoserine + ADP + H(+). Its pathway is amino-acid biosynthesis; L-threonine biosynthesis; L-threonine from L-aspartate: step 4/5. In terms of biological role, catalyzes the ATP-dependent phosphorylation of L-homoserine to L-homoserine phosphate. The polypeptide is Homoserine kinase (Edwardsiella ictaluri (strain 93-146)).